Reading from the N-terminus, the 232-residue chain is Ribose-5-phosphate isomerase A (232 aa).

Substrate-binding positions include 28–31 (TGST), 83–86 (DGAD), and 96–99 (KGGG). Catalysis depends on E105, which acts as the Proton acceptor. K123 is a binding site for substrate.

Belongs to the ribose 5-phosphate isomerase family. In terms of assembly, homodimer.

The catalysed reaction is aldehydo-D-ribose 5-phosphate = D-ribulose 5-phosphate. The protein operates within carbohydrate degradation; pentose phosphate pathway; D-ribose 5-phosphate from D-ribulose 5-phosphate (non-oxidative stage): step 1/1. In terms of biological role, catalyzes the reversible conversion of ribose-5-phosphate to ribulose 5-phosphate. The sequence is that of Ribose-5-phosphate isomerase A from Rhodopseudomonas palustris (strain ATCC BAA-98 / CGA009).